The sequence spans 365 residues: Phospho-N-acetylmuramoyl-pentapeptide-transferase (365 aa).

Helical transmembrane passes span tyrosine 22 to glycine 42, threonine 74 to leucine 94, serine 95 to phenylalanine 115, lysine 134 to serine 154, leucine 169 to serine 189, glycine 201 to glutamine 221, leucine 240 to phenylalanine 260, phenylalanine 268 to isoleucine 288, leucine 292 to valine 312, and lysine 342 to isoleucine 362.

This sequence belongs to the glycosyltransferase 4 family. MraY subfamily. Mg(2+) serves as cofactor.

The protein localises to the cell inner membrane. It catalyses the reaction UDP-N-acetyl-alpha-D-muramoyl-L-alanyl-gamma-D-glutamyl-meso-2,6-diaminopimeloyl-D-alanyl-D-alanine + di-trans,octa-cis-undecaprenyl phosphate = di-trans,octa-cis-undecaprenyl diphospho-N-acetyl-alpha-D-muramoyl-L-alanyl-D-glutamyl-meso-2,6-diaminopimeloyl-D-alanyl-D-alanine + UMP. It functions in the pathway cell wall biogenesis; peptidoglycan biosynthesis. Catalyzes the initial step of the lipid cycle reactions in the biosynthesis of the cell wall peptidoglycan: transfers peptidoglycan precursor phospho-MurNAc-pentapeptide from UDP-MurNAc-pentapeptide onto the lipid carrier undecaprenyl phosphate, yielding undecaprenyl-pyrophosphoryl-MurNAc-pentapeptide, known as lipid I. In Francisella philomiragia subsp. philomiragia (strain ATCC 25017 / CCUG 19701 / FSC 153 / O#319-036), this protein is Phospho-N-acetylmuramoyl-pentapeptide-transferase.